The sequence spans 276 residues: Large ribosomal subunit protein uL2 (276 aa).

The tract at residues 219–276 (TVRGSVMNPNDHPHGGGEGRAPIGRKSPMSPWGKPTLGYKTRQRNKPSDKYIVRKRKK) is disordered.

This sequence belongs to the universal ribosomal protein uL2 family. As to quaternary structure, part of the 50S ribosomal subunit. Forms a bridge to the 30S subunit in the 70S ribosome.

One of the primary rRNA binding proteins. Required for association of the 30S and 50S subunits to form the 70S ribosome, for tRNA binding and peptide bond formation. It has been suggested to have peptidyltransferase activity; this is somewhat controversial. Makes several contacts with the 16S rRNA in the 70S ribosome. This chain is Large ribosomal subunit protein uL2, found in Oceanobacillus iheyensis (strain DSM 14371 / CIP 107618 / JCM 11309 / KCTC 3954 / HTE831).